Reading from the N-terminus, the 96-residue chain is Small ribosomal subunit protein bS6 (96 aa).

It belongs to the bacterial ribosomal protein bS6 family.

Its function is as follows. Binds together with bS18 to 16S ribosomal RNA. This chain is Small ribosomal subunit protein bS6, found in Heliobacterium modesticaldum (strain ATCC 51547 / Ice1).